The following is a 286-amino-acid chain: Light-independent protochlorophyllide reductase iron-sulfur ATP-binding protein (286 aa).

ATP-binding positions include Gly-10 to Thr-15 and Lys-39. Mg(2+) is bound at residue Ser-14. Residues Cys-95 and Cys-129 each contribute to the [4Fe-4S] cluster site. ATP is bound at residue Asn-180–Arg-181.

This sequence belongs to the NifH/BchL/ChlL family. Homodimer. Protochlorophyllide reductase is composed of three subunits; ChlL, ChlN and ChlB. [4Fe-4S] cluster is required as a cofactor.

The enzyme catalyses chlorophyllide a + oxidized 2[4Fe-4S]-[ferredoxin] + 2 ADP + 2 phosphate = protochlorophyllide a + reduced 2[4Fe-4S]-[ferredoxin] + 2 ATP + 2 H2O. The protein operates within porphyrin-containing compound metabolism; chlorophyll biosynthesis (light-independent). In terms of biological role, component of the dark-operative protochlorophyllide reductase (DPOR) that uses Mg-ATP and reduced ferredoxin to reduce ring D of protochlorophyllide (Pchlide) to form chlorophyllide a (Chlide). This reaction is light-independent. The L component serves as a unique electron donor to the NB-component of the complex, and binds Mg-ATP. The polypeptide is Light-independent protochlorophyllide reductase iron-sulfur ATP-binding protein (Leptolyngbya boryana (Plectonema boryanum)).